Reading from the N-terminus, the 212-residue chain is FMN-dependent NADH:quinone oxidoreductase 1 (212 aa).

FMN is bound by residues serine 10, 16–18 (SHS), 97–100 (MYNF), and 145–148 (SRGG).

Belongs to the azoreductase type 1 family. As to quaternary structure, homodimer. FMN is required as a cofactor.

The enzyme catalyses 2 a quinone + NADH + H(+) = 2 a 1,4-benzosemiquinone + NAD(+). It carries out the reaction N,N-dimethyl-1,4-phenylenediamine + anthranilate + 2 NAD(+) = 2-(4-dimethylaminophenyl)diazenylbenzoate + 2 NADH + 2 H(+). Its function is as follows. Quinone reductase that provides resistance to thiol-specific stress caused by electrophilic quinones. In terms of biological role, also exhibits azoreductase activity. Catalyzes the reductive cleavage of the azo bond in aromatic azo compounds to the corresponding amines. This Pseudomonas fluorescens (strain Pf0-1) protein is FMN-dependent NADH:quinone oxidoreductase 1.